The chain runs to 337 residues: Glyceraldehyde-3-phosphate dehydrogenase (337 aa).

NAD(+) contacts are provided by residues 12 to 13 (RI), aspartate 34, arginine 78, and threonine 121. D-glyceraldehyde 3-phosphate-binding positions include 151-153 (SCT), threonine 182, arginine 199, 212-213 (SG), and arginine 235. Cysteine 152 (nucleophile) is an active-site residue. Asparagine 317 serves as a coordination point for NAD(+).

The protein belongs to the glyceraldehyde-3-phosphate dehydrogenase family. As to quaternary structure, homotetramer.

Its subcellular location is the cytoplasm. It carries out the reaction D-glyceraldehyde 3-phosphate + phosphate + NAD(+) = (2R)-3-phospho-glyceroyl phosphate + NADH + H(+). It functions in the pathway carbohydrate degradation; glycolysis; pyruvate from D-glyceraldehyde 3-phosphate: step 1/5. Its function is as follows. Catalyzes the oxidative phosphorylation of glyceraldehyde 3-phosphate (G3P) to 1,3-bisphosphoglycerate (BPG) using the cofactor NAD. The first reaction step involves the formation of a hemiacetal intermediate between G3P and a cysteine residue, and this hemiacetal intermediate is then oxidized to a thioester, with concomitant reduction of NAD to NADH. The reduced NADH is then exchanged with the second NAD, and the thioester is attacked by a nucleophilic inorganic phosphate to produce BPG. The polypeptide is Glyceraldehyde-3-phosphate dehydrogenase (gap) (Lactococcus lactis subsp. lactis (strain IL1403) (Streptococcus lactis)).